A 109-amino-acid chain; its full sequence is Nucleoid-associated protein CKO_02678 (109 aa).

Positions 89-109 (KEKMASVSSGMQLPPGFKMPF) are disordered.

Belongs to the YbaB/EbfC family. In terms of assembly, homodimer.

It is found in the cytoplasm. The protein resides in the nucleoid. Functionally, binds to DNA and alters its conformation. May be involved in regulation of gene expression, nucleoid organization and DNA protection. The chain is Nucleoid-associated protein CKO_02678 from Citrobacter koseri (strain ATCC BAA-895 / CDC 4225-83 / SGSC4696).